The primary structure comprises 498 residues: Hexokinase-1 (498 aa).

Residues 39-492 enclose the Hexokinase domain; that stretch reads AAAQRVVAEL…SGLGAALVAA (454 aa). Residues 95-233 are hexokinase small subdomain; the sequence is TGGEEGSYYA…GLDMRVSALI (139 aa). 3 residues coordinate ADP: glycine 109, threonine 110, and asparagine 111. Residues threonine 199, lysine 200, asparagine 234, and aspartate 235 each coordinate D-glucose. The tract at residues 234-481 is hexokinase large subdomain; the sequence is NDTVGTLAAG…ERVVVKLASD (248 aa). Threonine 258 contributes to the ADP binding site. Positions 261, 290, and 321 each coordinate D-glucose. Position 446 (glycine 446) interacts with ADP.

Belongs to the hexokinase family. In terms of tissue distribution, highly expressed in senescent leaves.

The enzyme catalyses a D-hexose + ATP = a D-hexose 6-phosphate + ADP + H(+). It catalyses the reaction D-fructose + ATP = D-fructose 6-phosphate + ADP + H(+). The catalysed reaction is D-glucose + ATP = D-glucose 6-phosphate + ADP + H(+). Its pathway is carbohydrate metabolism; hexose metabolism. It functions in the pathway carbohydrate degradation; glycolysis; D-glyceraldehyde 3-phosphate and glycerone phosphate from D-glucose: step 1/4. In terms of biological role, fructose and glucose phosphorylating enzyme. Acts as a positive regulator of leaf senescence by mediating glucose accumulation and inducing an increase in reactive oxygen species (ROS). This chain is Hexokinase-1 (HXK1), found in Oryza sativa subsp. japonica (Rice).